The sequence spans 149 residues: Nucleoside diphosphate kinase (149 aa).

ATP contacts are provided by K9, F57, R85, T91, R102, and N112. H115 (pros-phosphohistidine intermediate) is an active-site residue.

Belongs to the NDK family. In terms of assembly, homotetramer. Mg(2+) serves as cofactor.

The protein resides in the cytoplasm. The catalysed reaction is a 2'-deoxyribonucleoside 5'-diphosphate + ATP = a 2'-deoxyribonucleoside 5'-triphosphate + ADP. It catalyses the reaction a ribonucleoside 5'-diphosphate + ATP = a ribonucleoside 5'-triphosphate + ADP. Functionally, major role in the synthesis of nucleoside triphosphates other than ATP. The ATP gamma phosphate is transferred to the NDP beta phosphate via a ping-pong mechanism, using a phosphorylated active-site intermediate. This is Nucleoside diphosphate kinase from Cyanothece sp. (strain PCC 7425 / ATCC 29141).